The chain runs to 510 residues: 2,3-bisphosphoglycerate-independent phosphoglycerate mutase (510 aa).

Mn(2+) contacts are provided by D13 and S63. The active-site Phosphoserine intermediate is the S63. Substrate-binding positions include H124, 154–155 (RD), R186, R192, 262–265 (RADR), and K334. The Mn(2+) site is built by D401, H405, D442, H443, and H461.

Belongs to the BPG-independent phosphoglycerate mutase family. In terms of assembly, monomer. Mn(2+) serves as cofactor.

It catalyses the reaction (2R)-2-phosphoglycerate = (2R)-3-phosphoglycerate. It functions in the pathway carbohydrate degradation; glycolysis; pyruvate from D-glyceraldehyde 3-phosphate: step 3/5. In terms of biological role, catalyzes the interconversion of 2-phosphoglycerate and 3-phosphoglycerate. The protein is 2,3-bisphosphoglycerate-independent phosphoglycerate mutase of Vibrio campbellii (strain ATCC BAA-1116).